A 563-amino-acid chain; its full sequence is Cytidine monophosphate-N-acetylneuraminic acid hydroxylase (563 aa).

Residues 10 to 108 (LSPAETANLK…VEMDGNDGLF (99 aa)) form the Rieske domain. [2Fe-2S] cluster-binding residues include C50, H52, C71, and H74.

It belongs to the CMP-Neu5Ac hydroxylase family. [2Fe-2S] cluster serves as cofactor.

The protein localises to the cytoplasm. The catalysed reaction is CMP-N-acetyl-beta-neuraminate + 2 Fe(II)-[cytochrome b5] + O2 + 2 H(+) = CMP-N-glycoloyl-beta-neuraminate + 2 Fe(III)-[cytochrome b5] + H2O. The protein operates within amino-sugar metabolism; N-acetylneuraminate metabolism. In terms of biological role, sialic acids are components of carbohydrate chains of glycoconjugates and are involved in cell-cell recognition and cell-pathogen interactions. Catalyzes the conversion of CMP-N-acetylneuraminic acid (CMP-Neu5Ac) into its hydroxylated derivative CMP-N-glycolylneuraminic acid (CMP-Neu5Gc), a sialic acid abundantly expressed at the surface of many cells. The sequence is that of Cytidine monophosphate-N-acetylneuraminic acid hydroxylase (CMAH) from Cricetulus griseus (Chinese hamster).